Consider the following 180-residue polypeptide: Der GTPase-activating protein YihI (180 aa).

2 disordered regions span residues 1-90 (MSRK…QERR) and 145-180 (EPEEDEDFTAPAVKGSRNDDDLLADFDDINFDDYKG). Positions 23 to 32 (NRTESDVEGR) are enriched in basic and acidic residues. Residues 33–43 (LRKRAKKRKGL) are compositionally biased toward basic residues. Composition is skewed to basic and acidic residues over residues 50 to 68 (SDAEEQKRQAAAQKRDPRL) and 80 to 90 (PVKKQTKQERR). Residues 165–180 (DLLADFDDINFDDYKG) show a composition bias toward acidic residues.

This sequence belongs to the YihI family. As to quaternary structure, interacts with Der.

Its function is as follows. A GTPase-activating protein (GAP) that modifies Der/EngA GTPase function. May play a role in ribosome biogenesis. The polypeptide is Der GTPase-activating protein YihI (Vibrio campbellii (strain ATCC BAA-1116)).